The sequence spans 250 residues: 5-oxoprolinase subunit A (250 aa).

It belongs to the LamB/PxpA family. In terms of assembly, forms a complex composed of PxpA, PxpB and PxpC.

It carries out the reaction 5-oxo-L-proline + ATP + 2 H2O = L-glutamate + ADP + phosphate + H(+). In terms of biological role, catalyzes the cleavage of 5-oxoproline to form L-glutamate coupled to the hydrolysis of ATP to ADP and inorganic phosphate. The chain is 5-oxoprolinase subunit A from Paraburkholderia phymatum (strain DSM 17167 / CIP 108236 / LMG 21445 / STM815) (Burkholderia phymatum).